A 256-amino-acid polypeptide reads, in one-letter code: Pimeloyl-[acyl-carrier protein] methyl ester esterase (256 aa).

Residues 15-242 form the AB hydrolase-1 domain; it reads HLVLLHGWGL…AAHAPFISHP (228 aa). Substrate-binding positions include W22, 82–83, and 143–147; these read SL and FLALQ. The Nucleophile role is filled by S82. Residues D207 and H235 contribute to the active site. A substrate-binding site is contributed by H235.

It belongs to the AB hydrolase superfamily. Carboxylesterase BioH family. In terms of assembly, monomer.

The protein localises to the cytoplasm. It catalyses the reaction 6-carboxyhexanoyl-[ACP] methyl ester + H2O = 6-carboxyhexanoyl-[ACP] + methanol + H(+). Its pathway is cofactor biosynthesis; biotin biosynthesis. Its function is as follows. The physiological role of BioH is to remove the methyl group introduced by BioC when the pimeloyl moiety is complete. It allows to synthesize pimeloyl-ACP via the fatty acid synthetic pathway through the hydrolysis of the ester bonds of pimeloyl-ACP esters. This is Pimeloyl-[acyl-carrier protein] methyl ester esterase from Escherichia coli (strain K12 / MC4100 / BW2952).